The primary structure comprises 317 residues: Porphobilinogen deaminase (317 aa).

C245 is subject to S-(dipyrrolylmethanemethyl)cysteine.

The protein belongs to the HMBS family. As to quaternary structure, monomer. It depends on dipyrromethane as a cofactor.

It catalyses the reaction 4 porphobilinogen + H2O = hydroxymethylbilane + 4 NH4(+). It functions in the pathway porphyrin-containing compound metabolism; protoporphyrin-IX biosynthesis; coproporphyrinogen-III from 5-aminolevulinate: step 2/4. It participates in porphyrin-containing compound metabolism; chlorophyll biosynthesis. Tetrapolymerization of the monopyrrole PBG into the hydroxymethylbilane pre-uroporphyrinogen in several discrete steps. The protein is Porphobilinogen deaminase of Synechococcus sp. (strain CC9902).